Here is a 79-residue protein sequence, read N- to C-terminus: Beta-defensin 15 (79 aa).

A signal peptide spans 1–20 (MKTFLFLFAVLFFLDPAKNA). 3 disulfide bridges follow: Cys-26–Cys-53, Cys-33–Cys-47, and Cys-37–Cys-54.

Belongs to the beta-defensin family. In terms of tissue distribution, expressed in testis and to a lesser extent in epididymis (caput, corpus and cauda). Also weakly expressed in kidneys and colon.

It is found in the secreted. In terms of biological role, has antibacterial activity. This Mus musculus (Mouse) protein is Beta-defensin 15 (Defb15).